The following is a 177-amino-acid chain: Disulfide bond formation protein B (177 aa).

Topologically, residues 1-14 (MLALLKQFSEKRFV) are cytoplasmic. Residues 15-31 (WFLLAFSSLALESTALY) form a helical membrane-spanning segment. At 32–49 (FQYGMGLQPCVLCVYERL) the chain is on the periplasmic side. A disulfide bond links C41 and C44. A helical transmembrane segment spans residues 50 to 65 (AMIGLFVAGIIALLQP). Over 66-72 (LAFILRL) the chain is Cytoplasmic. The chain crosses the membrane as a helical span at residues 73–90 (IALALGLFSSIKGLLISF). The Periplasmic segment spans residues 91-145 (RHLDLQMNPAPWKQCEFIPNFPETLPFHQWFPFIFNPTGSCNESQWSLFGLTMVQ). C105 and C131 form a disulfide bridge. Residues 146–164 (WLVVIFSLYVVILTLLLIA) traverse the membrane as a helical segment. The Cytoplasmic segment spans residues 165–177 (QVIKTRKQRRLFN).

It belongs to the DsbB family.

The protein resides in the cell inner membrane. Its function is as follows. Required for disulfide bond formation in some periplasmic proteins. Acts by oxidizing the DsbA protein. The protein is Disulfide bond formation protein B of Haemophilus influenzae (strain 86-028NP).